Here is a 286-residue protein sequence, read N- to C-terminus: ATP synthase gamma chain (286 aa).

Belongs to the ATPase gamma chain family. In terms of assembly, F-type ATPases have 2 components, CF(1) - the catalytic core - and CF(0) - the membrane proton channel. CF(1) has five subunits: alpha(3), beta(3), gamma(1), delta(1), epsilon(1). CF(0) has three main subunits: a, b and c.

It is found in the cell inner membrane. In terms of biological role, produces ATP from ADP in the presence of a proton gradient across the membrane. The gamma chain is believed to be important in regulating ATPase activity and the flow of protons through the CF(0) complex. The sequence is that of ATP synthase gamma chain from Pseudomonas savastanoi pv. phaseolicola (strain 1448A / Race 6) (Pseudomonas syringae pv. phaseolicola (strain 1448A / Race 6)).